The chain runs to 100 residues: Large ribosomal subunit protein bL28 (100 aa).

It belongs to the bacterial ribosomal protein bL28 family.

In Ehrlichia chaffeensis (strain ATCC CRL-10679 / Arkansas), this protein is Large ribosomal subunit protein bL28.